A 193-amino-acid chain; its full sequence is Acyl carrier protein phosphodiesterase (193 aa).

This sequence belongs to the AcpH family.

It carries out the reaction holo-[ACP] + H2O = apo-[ACP] + (R)-4'-phosphopantetheine + H(+). In terms of biological role, converts holo-ACP to apo-ACP by hydrolytic cleavage of the phosphopantetheine prosthetic group from ACP. The chain is Acyl carrier protein phosphodiesterase from Serratia proteamaculans (strain 568).